The sequence spans 155 residues: Large ribosomal subunit protein uL22 (155 aa).

Belongs to the universal ribosomal protein uL22 family. Part of the 50S ribosomal subunit.

Functionally, this protein binds specifically to 23S rRNA. It makes multiple contacts with different domains of the 23S rRNA in the assembled 50S subunit and ribosome. The globular domain of the protein is located near the polypeptide exit tunnel on the outside of the subunit, while an extended beta-hairpin is found that lines the wall of the exit tunnel in the center of the 70S ribosome. The polypeptide is Large ribosomal subunit protein uL22 (Pyrococcus abyssi (strain GE5 / Orsay)).